Consider the following 132-residue polypeptide: Small ribosomal subunit protein uS8 (132 aa).

This sequence belongs to the universal ribosomal protein uS8 family. Part of the 30S ribosomal subunit. Contacts proteins S5 and S12.

In terms of biological role, one of the primary rRNA binding proteins, it binds directly to 16S rRNA central domain where it helps coordinate assembly of the platform of the 30S subunit. In Acetivibrio thermocellus (strain ATCC 27405 / DSM 1237 / JCM 9322 / NBRC 103400 / NCIMB 10682 / NRRL B-4536 / VPI 7372) (Clostridium thermocellum), this protein is Small ribosomal subunit protein uS8.